Reading from the N-terminus, the 466-residue chain is A-type ATP synthase subunit B (466 aa).

It belongs to the ATPase alpha/beta chains family. In terms of assembly, has multiple subunits with at least A(3), B(3), C, D, E, F, H, I and proteolipid K(x).

It localises to the cell membrane. Component of the A-type ATP synthase that produces ATP from ADP in the presence of a proton gradient across the membrane. The B chain is a regulatory subunit. The sequence is that of A-type ATP synthase subunit B from Metallosphaera sedula (strain ATCC 51363 / DSM 5348 / JCM 9185 / NBRC 15509 / TH2).